Here is a 336-residue protein sequence, read N- to C-terminus: Fructose-1,6-bisphosphatase class 1 (336 aa).

Residues Glu-90, Asp-112, Leu-114, and Asp-115 each contribute to the Mg(2+) site. Substrate contacts are provided by residues 115–118 (DGSS), Asn-211, and Lys-277. Glu-283 is a binding site for Mg(2+).

This sequence belongs to the FBPase class 1 family. In terms of assembly, homotetramer. Mg(2+) is required as a cofactor.

The protein resides in the cytoplasm. The enzyme catalyses beta-D-fructose 1,6-bisphosphate + H2O = beta-D-fructose 6-phosphate + phosphate. Its pathway is carbohydrate biosynthesis; gluconeogenesis. The sequence is that of Fructose-1,6-bisphosphatase class 1 from Pseudomonas aeruginosa (strain ATCC 15692 / DSM 22644 / CIP 104116 / JCM 14847 / LMG 12228 / 1C / PRS 101 / PAO1).